Consider the following 793-residue polypeptide: Toll-like receptor 6 (793 aa).

A signal peptide spans 1–23 (MIKDKESPIRSCHFVYIVALVFG). At 24–584 (TIIQFSDESE…FQVSELSCNT (561 aa)) the chain is on the extracellular side. 19 LRR repeats span residues 54 to 77 (TKVL…FLSG), 78 to 101 (LRVL…FNHD), 102 to 122 (LEYL…PITT), 123 to 147 (TLKH…GNLT), 148 to 168 (QLNF…LPIA), 169 to 196 (HLHL…ILNT), 197 to 219 (KKLH…SANS), 220 to 250 (LGCL…GGPT), 251 to 277 (LLNF…WPKP), 278 to 303 (IEYL…YKTT), 304 to 330 (LKAL…VFSE), 331 to 354 (MNIL…EPST), 355 to 378 (FKFL…TLAR), 379 to 404 (LETL…DMLS), 405 to 428 (LETL…SWVG), 429 to 449 (SIVV…RCLP), 450 to 473 (PRIK…TGLE), 474 to 495 (TLQE…GIFS), and 496 to 519 (SLSI…QSCQ). Asn63 is a glycosylation site (N-linked (GlcNAc...) asparagine). Cys117 and Cys140 are disulfide-bonded. N-linked (GlcNAc...) asparagine glycosylation is present at Asn145. Cys235 and Cys265 are joined by a disulfide. 2 N-linked (GlcNAc...) asparagine glycosylation sites follow: Asn253 and Asn285. A disulfide bridge links Cys348 with Cys373. N-linked (GlcNAc...) asparagine glycosylation occurs at Asn359. Asn423 and Asn434 each carry an N-linked (GlcNAc...) asparagine glycan. Cys424 and Cys447 are joined by a disulfide. The region spanning 520–575 (KIRSLKAGNNPFQCSCELRDFIQSVGQVSSDVVEGWPESYKCDYPESYKGTPLKDF) is the LRRCT domain. The chain crosses the membrane as a helical span at residues 585-605 (ALLIITIVVPGLVLAVAVTVL). At 606–793 (CIYLDLPWYL…KLMEKAAEIH (188 aa)) the chain is on the cytoplasmic side. In terms of domain architecture, TIR spans 640 to 781 (LQFHAFISYS…LFWANLRASI (142 aa)).

The protein belongs to the Toll-like receptor family. In terms of assembly, homodimer (via cytoplasmic TIR domain). Heterodimer with TLR2 via their respective extracellular domains. Binds MYD88 via their respective TIR domains. Interacts with CD36, following CD36 stimulation by oxLDL or amyloid-beta 42, and forms a heterodimer with TLR4. The trimeric complex is internalized and triggers inflammatory response. LYN kinase activity facilitates TLR4-TLR6 heterodimerization and signal initiation. The heterodimer TLR2:TLR6 interacts with CD14 and CD36 in response to triacylated lipopeptides. In terms of tissue distribution, highest expression levels seen in blood and lymph node, intermediate expression seen in spleen and lowest expression seen in the liver, lung and udder cistern.

The protein resides in the cell membrane. It is found in the cytoplasmic vesicle. Its subcellular location is the phagosome membrane. It localises to the membrane raft. The protein localises to the golgi apparatus. Participates in the innate immune response to Gram-positive bacteria and fungi. Specifically recognizes diacylated and, to a lesser extent, triacylated lipopeptides. In response to diacylated lipopeptides, forms the activation cluster TLR2:TLR6:CD14:CD36, this cluster triggers signaling from the cell surface and subsequently is targeted to the Golgi in a lipid-raft dependent pathway. Acts via MYD88 and TRAF6, leading to NF-kappa-B activation, cytokine secretion and the inflammatory response. Recognizes mycoplasmal macrophage-activating lipopeptide-2kD (MALP-2), soluble tuberculosis factor (STF), phenol-soluble modulin (PSM) and B.burgdorferi outer surface protein A lipoprotein (OspA-L) cooperatively with TLR2. In complex with TLR4, promotes sterile inflammation in monocytes/macrophages in response to oxidized low-density lipoprotein (oxLDL) or amyloid-beta 42. In this context, the initial signal is provided by oxLDL- or amyloid-beta 42-binding to CD36. This event induces the formation of a heterodimer of TLR4 and TLR6, which is rapidly internalized and triggers inflammatory response, leading to the NF-kappa-B-dependent production of CXCL1, CXCL2 and CCL9 cytokines, via MYD88 signaling pathway, and CCL5 cytokine, via TICAM1 signaling pathway, as well as IL1B secretion. In Bos taurus (Bovine), this protein is Toll-like receptor 6.